Reading from the N-terminus, the 355-residue chain is Zinc transporter ZIP13 homolog (355 aa).

Residue asparagine 4 is glycosylated (N-linked (GlcNAc...) asparagine). The next 3 helical transmembrane spans lie at 37 to 57 (VFSL…LIII), 79 to 99 (VLLS…LLPE), and 118 to 138 (LWVL…SGYA). N-linked (GlcNAc...) asparagine glycosylation is present at asparagine 218. Helical transmembrane passes span 273–293 (LLTA…SGVT) and 301–321 (SWIM…TVLP).

This sequence belongs to the ZIP transporter (TC 2.A.5) family. KE4/Catsup subfamily.

Its subcellular location is the basolateral cell membrane. The protein localises to the golgi apparatus membrane. Functionally, involved in zinc transport and homeostasis. This Drosophila melanogaster (Fruit fly) protein is Zinc transporter ZIP13 homolog (Zip99C).